A 221-amino-acid polypeptide reads, in one-letter code: Large ribosomal subunit protein uL3 (221 aa).

This sequence belongs to the universal ribosomal protein uL3 family. In terms of assembly, part of the 50S ribosomal subunit. Forms a cluster with proteins L14 and L19.

Its function is as follows. One of the primary rRNA binding proteins, it binds directly near the 3'-end of the 23S rRNA, where it nucleates assembly of the 50S subunit. In Nocardia farcinica (strain IFM 10152), this protein is Large ribosomal subunit protein uL3.